A 168-amino-acid chain; its full sequence is Large ribosomal subunit protein uL5 (168 aa).

This sequence belongs to the universal ribosomal protein uL5 family. As to quaternary structure, part of the 50S ribosomal subunit; contacts the 5S rRNA and probably tRNA. Forms a bridge to the 30S subunit in the 70S ribosome.

Functionally, this is one of the proteins that bind and probably mediate the attachment of the 5S RNA into the large ribosomal subunit, where it forms part of the central protuberance. In the 70S ribosome it contacts protein S13 of the 30S subunit (bridge B1b), connecting the 2 subunits; this bridge is implicated in subunit movement. May contact the P site tRNA; the 5S rRNA and some of its associated proteins might help stabilize positioning of ribosome-bound tRNAs. This chain is Large ribosomal subunit protein uL5, found in Methanosphaera stadtmanae (strain ATCC 43021 / DSM 3091 / JCM 11832 / MCB-3).